Reading from the N-terminus, the 142-residue chain is Hemoglobin subunit theta-1 (142 aa).

The 141-residue stretch at 2–142 (ALAAADRATV…VISALASDCR (141 aa)) folds into the Globin domain. Residues His59 and His88 each contribute to the heme b site.

Belongs to the globin family.

In Equus caballus (Horse), this protein is Hemoglobin subunit theta-1 (HBQ1).